The sequence spans 475 residues: Argininosuccinate lyase (475 aa).

This sequence belongs to the lyase 1 family. Argininosuccinate lyase subfamily.

It localises to the cytoplasm. The enzyme catalyses 2-(N(omega)-L-arginino)succinate = fumarate + L-arginine. Its pathway is amino-acid biosynthesis; L-arginine biosynthesis; L-arginine from L-ornithine and carbamoyl phosphate: step 3/3. The protein is Argininosuccinate lyase of Leifsonia xyli subsp. xyli (strain CTCB07).